A 147-amino-acid chain; its full sequence is D-aminoacyl-tRNA deacylase (147 aa).

Positions 136–137 match the Gly-cisPro motif, important for rejection of L-amino acids motif; it reads GP.

This sequence belongs to the DTD family. In terms of assembly, homodimer.

It is found in the cytoplasm. It catalyses the reaction glycyl-tRNA(Ala) + H2O = tRNA(Ala) + glycine + H(+). The catalysed reaction is a D-aminoacyl-tRNA + H2O = a tRNA + a D-alpha-amino acid + H(+). In terms of biological role, an aminoacyl-tRNA editing enzyme that deacylates mischarged D-aminoacyl-tRNAs. Also deacylates mischarged glycyl-tRNA(Ala), protecting cells against glycine mischarging by AlaRS. Acts via tRNA-based rather than protein-based catalysis; rejects L-amino acids rather than detecting D-amino acids in the active site. By recycling D-aminoacyl-tRNA to D-amino acids and free tRNA molecules, this enzyme counteracts the toxicity associated with the formation of D-aminoacyl-tRNA entities in vivo and helps enforce protein L-homochirality. The sequence is that of D-aminoacyl-tRNA deacylase from Streptococcus dysgalactiae subsp. equisimilis (Streptococcus equisimilis).